The following is a 540-amino-acid chain: ADP,ATP carrier protein 2 (540 aa).

12 consecutive transmembrane segments (helical) span residues 23 to 43, 61 to 81, 93 to 113, 150 to 170, 185 to 205, 222 to 242, 292 to 312, 334 to 354, 361 to 381, 389 to 409, 455 to 475, and 477 to 497; these read FSKF…YALL, VIPF…TMIY, VFIS…TVIY, LYYV…FWGV, ALIN…SLWL, EVLL…LYLY, LLGI…FEVV, ITTL…GQTI, IGAL…FGAI, MIFG…LGGV, SGGS…AASL, and AITI…AWLG.

Belongs to the ADP/ATP translocase tlc family.

The protein resides in the cell membrane. The protein is ADP,ATP carrier protein 2 (tlcB) of Chlamydia trachomatis serovar D (strain ATCC VR-885 / DSM 19411 / UW-3/Cx).